The chain runs to 796 residues: Protein translocase subunit SecA 2 (796 aa).

Residues Gln-84, 102–106 (GEGKT), and Asp-496 contribute to the ATP site.

Belongs to the SecA family. In terms of assembly, monomer and homodimer. Part of the essential Sec protein translocation apparatus which comprises SecA, SecYEG and auxiliary proteins SecDF. Other proteins may also be involved.

It is found in the cell membrane. The protein resides in the cytoplasm. The catalysed reaction is ATP + H2O + cellular proteinSide 1 = ADP + phosphate + cellular proteinSide 2.. Its function is as follows. Part of the Sec protein translocase complex. Interacts with the SecYEG preprotein conducting channel. Has a central role in coupling the hydrolysis of ATP to the transfer of proteins into and across the cell membrane, serving as an ATP-driven molecular motor driving the stepwise translocation of polypeptide chains across the membrane. The chain is Protein translocase subunit SecA 2 from Staphylococcus haemolyticus (strain JCSC1435).